Here is a 257-residue protein sequence, read N- to C-terminus: LexA repressor (257 aa).

The segment at residues 64-84 is a DNA-binding region (H-T-H motif); sequence FREIGEAAGLKSPSSVKHQLQ. Catalysis depends on for autocatalytic cleavage activity residues Ser181 and Lys218.

It belongs to the peptidase S24 family. In terms of assembly, homodimer.

It catalyses the reaction Hydrolysis of Ala-|-Gly bond in repressor LexA.. In terms of biological role, represses a number of genes involved in the response to DNA damage (SOS response), including recA and lexA. In the presence of single-stranded DNA, RecA interacts with LexA causing an autocatalytic cleavage which disrupts the DNA-binding part of LexA, leading to derepression of the SOS regulon and eventually DNA repair. This chain is LexA repressor, found in Bifidobacterium adolescentis (strain ATCC 15703 / DSM 20083 / NCTC 11814 / E194a).